A 430-amino-acid polypeptide reads, in one-letter code: Probable protein phosphatase 1N (430 aa).

The disordered stretch occupies residues 16–65 (CKKKEREKEGREEEEEEEAGRRAPEGPRSLLTAPRRAQRPHGGAEASGGL). The span at 17–26 (KKKEREKEGR) shows a compositional bias: basic and acidic residues. The PPM-type phosphatase domain maps to 66–326 (RFGASAAQGW…DNMTCILVCF (261 aa)). Mn(2+) contacts are provided by aspartate 103, glycine 104, aspartate 274, and aspartate 317. The tract at residues 407 to 430 (GEKGQDGAGKSNPTHLGSALDMEA) is disordered.

Belongs to the PP2C family. It depends on Mg(2+) as a cofactor. Mn(2+) serves as cofactor.

The enzyme catalyses O-phospho-L-seryl-[protein] + H2O = L-seryl-[protein] + phosphate. It catalyses the reaction O-phospho-L-threonyl-[protein] + H2O = L-threonyl-[protein] + phosphate. The protein is Probable protein phosphatase 1N (PPM1N) of Homo sapiens (Human).